We begin with the raw amino-acid sequence, 184 residues long: Mediator of RNA polymerase II transcription subunit 30 (184 aa).

A coiled-coil region spans residues 136–179 (SQLRFASEEKREILEVNKKLKQKNQQLKQIMDQLRNLIWDINSM).

It belongs to the Mediator complex subunit 30 family. In terms of assembly, component of the Mediator complex.

The protein resides in the nucleus. Its function is as follows. Component of the Mediator complex, a coactivator involved in the regulated transcription of nearly all RNA polymerase II-dependent genes. Mediator functions as a bridge to convey information from gene-specific regulatory proteins to the basal RNA polymerase II transcription machinery. Mediator is recruited to promoters by direct interactions with regulatory proteins and serves as a scaffold for the assembly of a functional preinitiation complex with RNA polymerase II and the general transcription factors. The polypeptide is Mediator of RNA polymerase II transcription subunit 30 (med30) (Xenopus laevis (African clawed frog)).